Consider the following 173-residue polypeptide: Cell division protein SepF (173 aa).

The segment at 17–85 (SDDEYISDET…NELRTITTVH (69 aa)) is disordered. Low complexity predominate over residues 35–52 (SAGGSSAAVSESGSTSVA).

The protein belongs to the SepF family. As to quaternary structure, homodimer. Interacts with FtsZ.

It localises to the cytoplasm. Its function is as follows. Cell division protein that is part of the divisome complex and is recruited early to the Z-ring. Probably stimulates Z-ring formation, perhaps through the cross-linking of FtsZ protofilaments. Its function overlaps with FtsA. The chain is Cell division protein SepF from Kocuria rhizophila (strain ATCC 9341 / DSM 348 / NBRC 103217 / DC2201).